A 281-amino-acid polypeptide reads, in one-letter code: Putrescine transport system permease protein PotI (281 aa).

At 1-13 (MNNLPVVRSPWRI) the chain is on the cytoplasmic side. The chain crosses the membrane as a helical span at residues 14 to 33 (VILLLGFTFLYAPMLMLVIY). At 34 to 68 (SFNSSKLVTVWAGWSTRWYGELLRDDAMMSAVGLS) the chain is on the periplasmic side. Positions 65 to 260 (VGLSLTIAAC…GAVGIVGFIA (196 aa)) constitute an ABC transmembrane type-1 domain. The helical transmembrane segment at 69-88 (LTIAACAATAAAILGTIAAV) threads the bilayer. Topologically, residues 89–115 (VLVRFGRFRGSNGFAFMITAPLVMPDV) are cytoplasmic. Residues 116 to 135 (ITGLSLLLLFVALAHAIGWP) form a helical membrane-spanning segment. Over 136–140 (ADRGM) the chain is Periplasmic. Residues 141-160 (LTIWLAHVTFCTAYVAVVIS) form a helical membrane-spanning segment. The Cytoplasmic portion of the chain corresponds to 161-186 (SRLRELDRSIEEAAMDLGATPLKVFF). Residues 187 to 206 (VITLPMIMPAIISGWLLAFT) traverse the membrane as a helical segment. At 207 to 243 (LSLDDLVIASFVSGPGATTLPMLVFSSVRMGVNPEIN) the chain is on the periplasmic side. The chain crosses the membrane as a helical span at residues 244–263 (ALATLILGAVGIVGFIAWYL). Topologically, residues 264–281 (MARAEKQRIRDIQRARRG) are cytoplasmic.

Belongs to the binding-protein-dependent transport system permease family. CysTW subfamily. As to quaternary structure, the complex is composed of two ATP-binding proteins (PotG), two transmembrane proteins (PotH and PotI) and a solute-binding protein (PotF).

The protein resides in the cell inner membrane. In terms of biological role, part of the ABC transporter complex PotFGHI involved in putrescine uptake. Responsible for the translocation of the substrate across the membrane. The protein is Putrescine transport system permease protein PotI of Escherichia coli O6:H1 (strain CFT073 / ATCC 700928 / UPEC).